The sequence spans 255 residues: uncharacterized protein (255 aa).

The protein belongs to the methyltransferase superfamily.

This is an uncharacterized protein from Mycolicibacterium vanbaalenii (strain DSM 7251 / JCM 13017 / BCRC 16820 / KCTC 9966 / NRRL B-24157 / PYR-1) (Mycobacterium vanbaalenii).